Reading from the N-terminus, the 143-residue chain is Histone H2AX (143 aa).

The interval 1–22 (MSGRGKTGGKARAKAKSRSSRA) is disordered. Position 2 is an N-acetylserine (Ser-2). Phosphoserine is present on Ser-2. Residues Lys-6 and Lys-10 each carry the N6-acetyllysine modification. Basic residues predominate over residues 7–19 (TGGKARAKAKSRS). Lys-10 carries the N6-lactoyllysine; alternate modification. Residues Lys-14 and Lys-16 each participate in a glycyl lysine isopeptide (Lys-Gly) (interchain with G-Cter in ubiquitin) cross-link. Lys-37 carries the N6-acetyllysine modification. Lys-120 is covalently cross-linked (Glycyl lysine isopeptide (Lys-Gly) (interchain with G-Cter in ubiquitin)). The segment at 121–143 (TSATVGPKAPSGGKKATQASQEY) is disordered. A Phosphoserine modification is found at Ser-122. Glycyl lysine isopeptide (Lys-Gly) (interchain with G-Cter in SUMO2) cross-links involve residues Lys-128 and Lys-135. Residue Ser-140 is modified to Phosphoserine; by ATM, ATR and PRKDC. The [ST]-Q motif motif lies at 140–141 (SQ). Phosphotyrosine; by WSTF is present on Tyr-143.

This sequence belongs to the histone H2A family. As to quaternary structure, the nucleosome is a histone octamer containing two molecules each of H2A, H2B, H3 and H4 assembled in one H3-H4 heterotetramer and two H2A-H2B heterodimers. The octamer wraps approximately 147 bp of DNA. Interacts with numerous proteins required for DNA damage signaling and repair when phosphorylated on Ser-140. These include MDC1, TP53BP1, BRCA1 and the MRN complex, composed of MRE11, RAD50, and NBN. Interaction with the MRN complex is mediated at least in part by NBN. Also interacts with DHX9/NDHII when phosphorylated on Ser-140 and MCPH1 when phosphorylated at Ser-140 or Tyr-143. Interacts with ARRB2; the interaction is detected in the nucleus upon OR1D2 stimulation. Interacts with WRAP53/TCAB1. Interacts with HDGFL2. Interacts with DNA damage up-regulated protein DDUP. Forms a complex with DDUP and RAD18 following DDUP phosphorylation. (Microbial infection) Interacts with Epstein-Barr virus protein EBNA6. In terms of processing, phosphorylated by VRK1. Phosphorylated on Ser-140 (to form gamma-H2AX or H2AX139ph) in response to DNA double strand breaks (DSBs) generated by exogenous genotoxic agents and by stalled replication forks, and may also occur during meiotic recombination events and immunoglobulin class switching in lymphocytes. Phosphorylation can extend up to several thousand nucleosomes from the actual site of the DSB and may mark the surrounding chromatin for recruitment of proteins required for DNA damage signaling and repair. Widespread phosphorylation may also serve to amplify the damage signal or aid repair of persistent lesions. Phosphorylation of Ser-140 (H2AX139ph) in response to ionizing radiation is mediated by both ATM and PRKDC while defects in DNA replication induce Ser-140 phosphorylation (H2AX139ph) subsequent to activation of ATR and PRKDC. Dephosphorylation of Ser-140 by PP2A is required for DNA DSB repair. In meiosis, Ser-140 phosphorylation (H2AX139ph) may occur at synaptonemal complexes during leptotene as an ATM-dependent response to the formation of programmed DSBs by SPO11. Ser-140 phosphorylation (H2AX139ph) may subsequently occurs at unsynapsed regions of both autosomes and the XY bivalent during zygotene, downstream of ATR and BRCA1 activation. Ser-140 phosphorylation (H2AX139ph) may also be required for transcriptional repression of unsynapsed chromatin and meiotic sex chromosome inactivation (MSCI), whereby the X and Y chromosomes condense in pachytene to form the heterochromatic XY-body. During immunoglobulin class switch recombination in lymphocytes, Ser-140 phosphorylation (H2AX139ph) may occur at sites of DNA-recombination subsequent to activation of the activation-induced cytidine deaminase AICDA. Phosphorylation at Tyr-143 (H2AXY142ph) by BAZ1B/WSTF determines the relative recruitment of either DNA repair or pro-apoptotic factors. Phosphorylation at Tyr-143 (H2AXY142ph) favors the recruitment of APBB1/FE65 and pro-apoptosis factors such as MAPK8/JNK1, triggering apoptosis. In contrast, dephosphorylation of Tyr-143 by EYA proteins (EYA1, EYA2, EYA3 or EYA4) favors the recruitment of MDC1-containing DNA repair complexes to the tail of phosphorylated Ser-140 (H2AX139ph). Post-translationally, monoubiquitination of Lys-120 (H2AXK119ub) by RING1 and RNF2/RING2 complex gives a specific tag for epigenetic transcriptional repression. Following DNA double-strand breaks (DSBs), it is ubiquitinated through 'Lys-63' linkage of ubiquitin moieties by the E2 ligase UBE2N and the E3 ligases RNF8 and RNF168, leading to the recruitment of repair proteins to sites of DNA damage. Ubiquitination at Lys-14 and Lys-16 (H2AK13Ub and H2AK15Ub, respectively) in response to DNA damage is initiated by RNF168 that mediates monoubiquitination at these 2 sites, and 'Lys-63'-linked ubiquitin are then conjugated to monoubiquitin; RNF8 is able to extend 'Lys-63'-linked ubiquitin chains in vitro. H2AK119Ub and ionizing radiation-induced 'Lys-63'-linked ubiquitination (H2AK13Ub and H2AK15Ub) are distinct events. Acetylation at Lys-6 (H2AXK5ac) by KAT5 component of the NuA4 histone acetyltransferase complex promotes NBN/NBS1 assembly at the sites of DNA damage. Acetylation at Lys-37 increases in S and G2 phases. This modification has been proposed to play a role in DNA double-strand break repair.

The protein localises to the nucleus. The protein resides in the chromosome. Its function is as follows. Variant histone H2A which replaces conventional H2A in a subset of nucleosomes. Nucleosomes wrap and compact DNA into chromatin, limiting DNA accessibility to the cellular machineries which require DNA as a template. Histones thereby play a central role in transcription regulation, DNA repair, DNA replication and chromosomal stability. DNA accessibility is regulated via a complex set of post-translational modifications of histones, also called histone code, and nucleosome remodeling. Required for checkpoint-mediated arrest of cell cycle progression in response to low doses of ionizing radiation and for efficient repair of DNA double strand breaks (DSBs) specifically when modified by C-terminal phosphorylation. This chain is Histone H2AX, found in Homo sapiens (Human).